Here is a 424-residue protein sequence, read N- to C-terminus: MPPFLITLFLFHSCCLRANGHLREGMTLLKTEFALHLYQSVAACRNETNFVISPAGVSLPLEILQFGAEGSTGQQLADALGYTVHDKRVKDFLHAVYATLPTSSQGTEMELACSLFVQVGTPLSPCFVEHVSWWANSSLEPADLSEPNSTAIQTSEGASRETAGGGPSEGPGGWPWEQVSAAFAQLVLVSTMSFQGTWRKRFSSTDTQILPFTCAYGLVLQVPMMHQTTEVNYGQFQDTAGHQVGVLELPYLGSAVSLFLVLPRDKDTPLSHIEPHLTASTIHLWTTSLRRARMDVFLPRFRIQNQFNLKSILNSWGVTDLFDPLKANLKGISGQDGFYVSEAIHKAKIEVLEEGTKASGATALLLLKRSRIPIFKADRPFIYFLREPNTGITVFFDRIQIIYQCLSSNKGSFVHYPLKNKHSF.

The first 20 residues, 1–20 (MPPFLITLFLFHSCCLRANG), serve as a signal peptide directing secretion. An N-linked (GlcNAc...) asparagine glycan is attached at Asn-46. The tract at residues 143 to 174 (DLSEPNSTAIQTSEGASRETAGGGPSEGPGGW) is disordered. Polar residues predominate over residues 146-157 (EPNSTAIQTSEG). The segment covering 163-173 (AGGGPSEGPGG) has biased composition (gly residues).

Belongs to the serpin family.

The protein resides in the secreted. Functionally, probable serine protease inhibitor. The chain is Serpin E3 (SERPINE3) from Homo sapiens (Human).